Reading from the N-terminus, the 274-residue chain is 2,3,4,5-tetrahydropyridine-2,6-dicarboxylate N-succinyltransferase (274 aa).

Residues R105 and D142 each contribute to the substrate site.

This sequence belongs to the transferase hexapeptide repeat family. Homotrimer.

It is found in the cytoplasm. It carries out the reaction (S)-2,3,4,5-tetrahydrodipicolinate + succinyl-CoA + H2O = (S)-2-succinylamino-6-oxoheptanedioate + CoA. It functions in the pathway amino-acid biosynthesis; L-lysine biosynthesis via DAP pathway; LL-2,6-diaminopimelate from (S)-tetrahydrodipicolinate (succinylase route): step 1/3. The protein is 2,3,4,5-tetrahydropyridine-2,6-dicarboxylate N-succinyltransferase of Methylobacillus flagellatus (strain ATCC 51484 / DSM 6875 / VKM B-1610 / KT).